The chain runs to 327 residues: Zinc transport protein ZntB (327 aa).

At 1–273 the chain is on the cytoplasmic side; that stretch reads MEAIKGSDVN…ARRTYTMSLM (273 aa). The helical transmembrane segment at 274-294 threads the bilayer; the sequence is AMVFLPSTFLTGLFGVNLGGI. Residues 295–300 are Periplasmic-facing; it reads PGGGWQ. A helical transmembrane segment spans residues 301-321; that stretch reads FGFSIFCILLVVLIGGVALWL. Topologically, residues 322–327 are cytoplasmic; it reads YRSKWL.

Belongs to the CorA metal ion transporter (MIT) (TC 1.A.35) family.

The protein resides in the cell inner membrane. It catalyses the reaction Zn(2+)(out) + H(+)(out) = Zn(2+)(in) + H(+)(in). Its function is as follows. Zinc transporter. Acts as a Zn(2+):proton symporter, which likely mediates zinc ion uptake. The chain is Zinc transport protein ZntB from Shigella flexneri serotype 5b (strain 8401).